The following is a 1453-amino-acid chain: Clustered mitochondria protein homolog (1453 aa).

The span at L78 to S101 shows a compositional bias: polar residues. The interval L78–A110 is disordered. Residues E439 to L690 enclose the Clu domain. Positions P979–D1015 are disordered. Over residues K995–Q1005 the composition is skewed to basic residues. TPR repeat units lie at residues A1235–Y1268 and A1277–T1310.

It belongs to the CLU family.

The protein resides in the cytoplasm. Functionally, mRNA-binding protein involved in proper cytoplasmic distribution of mitochondria. The protein is Clustered mitochondria protein homolog of Brugia malayi (Filarial nematode worm).